The chain runs to 342 residues: MSKIDVAIIGASGYTGGELVRLLTRHPRVNISTVTSRKNNGEDLSSLHPNLQDLDLKFTNPDTKDIDADVVFSALPHGVSMKLVPEYLDNGARVIDLSGDFRFSDVSVYEKWYGMKHEHPDLKAVFGLPEINRDKIKDATLIANPGCFPTGAILSSLPIVENKLVDRIILDSKSGVSGAGISPNNNTHYPTCADNIKPYAIANHRHTPEIREQLRNFGTGTVKVSFTPHLVPVIRGIITTNHSFLLKNDVSASDVHDLYMDYYKNEPFVKVLKDNNIPLLASVRGSNYCQIGGISLDDEDELVVVSAIDNLVKGASGQAIQNMNIMFGFDETEGLKELGLYP.

Cysteine 147 is an active-site residue.

It belongs to the NAGSA dehydrogenase family. Type 1 subfamily.

It is found in the cytoplasm. It catalyses the reaction N-acetyl-L-glutamate 5-semialdehyde + phosphate + NADP(+) = N-acetyl-L-glutamyl 5-phosphate + NADPH + H(+). It participates in amino-acid biosynthesis; L-arginine biosynthesis; N(2)-acetyl-L-ornithine from L-glutamate: step 3/4. Its function is as follows. Catalyzes the NADPH-dependent reduction of N-acetyl-5-glutamyl phosphate to yield N-acetyl-L-glutamate 5-semialdehyde. This Methanosphaera stadtmanae (strain ATCC 43021 / DSM 3091 / JCM 11832 / MCB-3) protein is N-acetyl-gamma-glutamyl-phosphate reductase.